A 2312-amino-acid polypeptide reads, in one-letter code: MKGHQLKSWIFELREILREIKSVGSFIHIFFHQERFIKLLDSRIWSILLSRNSQGSTSNRYFTIKGVVLFVVVVLIYRINNRKMVERKNLYLTGLLPIPMNSIGPRNDTLEESFWSSNINRLIVSLLYLPKGKKISESSFLDPKESTWVLPITKKCIMSESNWGSRWWRNWIGKKRDSSCKISNETVAGIEISFKEKDIKYLEFLFVYYMDDPIRKDHDWELFDRLSPRKGRNIINLNSGQLFEILVKDWICYLMFAFREKIPIEVEGFFKQQGAGSTIQSNDIEHVSHLFSRKKWAISLQNCAQFHMWQFRQDLFVSWGNNPHESDFLRNISRENWIWLDNVWLVNKDRFFSKARNISSNIQYDSTRSSFVQGRNSSQLKGSSDQSRDHFDSISNEDSEYHTLINQRKIQQLKERSILWDPSFLQTERTEIESDRFPKCLSGYSSMSRLFTEGEKEMNNHLLPEEIEEFLGNPTRSIRSFFSDRSSELHLGSNPTERSTRNQKLLKKEQDVSFVPSRRSENKEIVNIFKIITYLQNTVSIHPISSDPGCDMVLKDELDMDSSNKISFLNKNPFFDLFHLFHDRNGGGYTLHHDFESEERFQEMADLFTLSITEPDLVYHKGFTFFIDSYGLDQKQFLNEVFNSRDESKKKSLLVLPPIFYEENESFYRRIRKKWVRISCGNDLEDPKQKIVVFASNNIMEAVNQYGLILNLIQIQYSTYGYIRNVLTQFFLMNRSDRNFEYGIQRDQIGNDTLNHRTIMKYTINQHLSNLKQSQKKWFDPLIFIFLSRTERSMNWDPNAYRYKWSNGSKNFQEHLEHFISEQKSRFLFQVVFDRLRINQYSIDWSEVIDKKDLSKSLRFFLSKLLLFLSKFLLFLSNSLPFFFVSFGNIPIHRSEIHIYELKGPNDQLCNQLVEPIGLQIVHLKKLKPFLLLLDDHDTSQKSKFLINGGTISPFLFNKIPKWMIDSFHTRNNRRKSFDNTDSYFSMISHDQDNWLNPVKPFHRSSLISSFYKANRLRFLNNLHHFCFYCNKRFPFYVEKARIKNYDFTYGQFLNILFIRNKIFSLCGGKKKHAFLERDTISPIESQVSNIFIPNDFPQSGNERYNLYKSFHFPIRSDPFVRRAIYSIADISGTPLTEGQIVNFERTYCQPLSDMNLSDSEGKNLHQYLNFNSNMGLIHTPCSEKYLPSEKRKKRSLCLKKCVEKGQMYRTFQRDNAFSTLSKWNLFQTYMPWFLTSTGYKYLNLIFLDTFSDLLPILSSSQKFLSIFHDIMHGSDISWLIFQKRLWKICRNLISEISSKCLHNLLLSEEMIHRNNEPPLISTHLRSPNVREFLYSILFLLLVAGYLVCTHLLFVSHAYSELQTEFEKVKSLMIPSYMIELRKLLDRYPTSELNSFWLKNLFLVALEQLGDFLEEMRGSASGGNMLWGGGPAYGVKSIRSKKKFWNINLIDLISIIPNPINRITFSRNTRHLSHTSKEIYSLIRKRKNVNGDWIDDKIESLVANSDWIDDKEREFLVQFSTLTTEKRIDQILLSLTHSDHLSKNDSGYQMIEEPGAIYLRYLVDIHKKYLMNYEFNTPCLAERRIFLAYYQTTTYSQTSCGVNSFHFPSHGKPFSLRLALSPSRGILVIGSIGTGRSYLVKYLATNSYLPFVTVFLNKFLNNKPKGFLIDDSDDIDDSDDIDDSDDIDASDDIDVSDDIDVSDDDIDRDFDFDTELEFLTTMDALTIDMMPEIEINRFYITLQFELAKAMSPCIIWIPNIHDLDVNESNYLSLGLLVNYLSRDCERCSTRNILVIASTHIPQKVDPALIAPNKLNTCIKIRRFLIPQQRKHFFTLSYTRGFHLENKMFHTNGFGSITMGSNVRDLVALTNEALSISITQKKSIIDTNIIRSALHRQTWDLRSRVRSVQDHGIFFYQIGRAVAQNVFLSNCPIDPISIYMKKKSCNEGDSYLYKWYFELGTSMKKLTILLYLLSCSAGSVAQDLWSLPGPDEKNGITYYGLVENDSDLVHGLLEVEGALVGSSRTEKDCSQFDNDRVTLLLRPEPRSPLDMMQNGSCSILDQRFLYEKYESEFEEGEGEEVLDPQQIEEDLFTHIVWAPRIWRPWGFLFDCIERPNELGFPYWARSFRGKRIIYDEEIIYDEEIIYDEEDELQENDSEFLQSGTMQYQIRDRSSKEQGFFRISQFIWDPADPLFFLFKDQPFVSVFSHREFFADEEMSKGLLTSQTDPPTSIYKRWFIKNTQEKRFELLIHRQRWLRTNSSLSNGFFRSNTLSESYQYLSNLFLSNGTLLDQMTKALLRKRWLFPDEMKIGFM.

1630–1637 contributes to the ATP binding site; that stretch reads GSIGTGRS.

It belongs to the Ycf2 family.

It is found in the plastid. The protein localises to the chloroplast stroma. Its function is as follows. Probable ATPase of unknown function. Its presence in a non-photosynthetic plant (Epifagus virginiana) and experiments in tobacco indicate that it has an essential function which is probably not related to photosynthesis. This Manihot esculenta (Cassava) protein is Protein Ycf2.